A 316-amino-acid polypeptide reads, in one-letter code: tRNA dimethylallyltransferase (316 aa).

17 to 24 (GPTASGKT) is an ATP binding site. 19-24 (TASGKT) lines the substrate pocket. Interaction with substrate tRNA regions lie at residues 42-45 (DSAL), 166-170 (QRLSR), 247-252 (RCVGYR), and 280-287 (KRQITWLR).

It belongs to the IPP transferase family. Monomer. Requires Mg(2+) as cofactor.

It catalyses the reaction adenosine(37) in tRNA + dimethylallyl diphosphate = N(6)-dimethylallyladenosine(37) in tRNA + diphosphate. Functionally, catalyzes the transfer of a dimethylallyl group onto the adenine at position 37 in tRNAs that read codons beginning with uridine, leading to the formation of N6-(dimethylallyl)adenosine (i(6)A). In Shigella flexneri serotype 5b (strain 8401), this protein is tRNA dimethylallyltransferase.